Here is a 629-residue protein sequence, read N- to C-terminus: (-)-alpha-pinene synthase, chloroplastic (629 aa).

The transit peptide at 1–48 directs the protein to the chloroplast; sequence MSPVSVISLPSDLCLPTSFIDRSGRELIPLHITIPNVAMRRQGKLMTR. Positions 380, 384, and 532 each coordinate Mg(2+). The DDXXD motif signature appears at 380 to 384; sequence DDMYD. S540 is a binding site for K(+).

The protein belongs to the terpene synthase family. Tpsd subfamily. Requires Mg(2+) as cofactor. It depends on Mn(2+) as a cofactor. K(+) is required as a cofactor.

Its subcellular location is the plastid. It is found in the chloroplast. It catalyses the reaction (2E)-geranyl diphosphate = (1S,5S)-alpha-pinene + diphosphate. The protein operates within terpene metabolism; oleoresin biosynthesis. Involved in defensive oleoresin formation in conifers in response to insect attack or other injury. Involved in monoterpene (C10) olefins biosynthesis. Produces mainly (-)-alpha-pinene (79%) and lesser amounts of (-)-beta-pinene (4.2%), nearly racemic mixtures of camphene (2.8% (+)/2.2% (-)) and limonene (2.4% (+)/3.7% (-)), as well as small amounts of (+)-alpha-pinene (3.3%) and (+)-beta-pinene (2.4%). In Pinus taeda (Loblolly pine), this protein is (-)-alpha-pinene synthase, chloroplastic (PT1).